The primary structure comprises 92 residues: Protein RnfH (92 aa).

The protein belongs to the UPF0125 (RnfH) family.

In Neisseria gonorrhoeae (strain NCCP11945), this protein is Protein RnfH.